The sequence spans 270 residues: MAPKVFYISDGTAITAEVFGHAVLSQFPLEFESLTIPFVETLAKAENVKRQINDCFITTGERPLVFHSIVKPEIRDIIYSSEGLDYDFLNTFVAPLEQHLGVSASPVLHRTHGKANHGYEARIDAINFAMDNDDGQTMKHMDQADLILLGVSRCGKTPSSLYLSMQFGIKAANYPFTEDDMDNLKLPEALKRNKKKLFGLTIDPVRLHEIRQSRMENSRYSSLKQCRLEVKEVEMMFKRERIPYIDTTNHSVEEIATKILDVTGLERHMF.

150 to 157 (GVSRCGKT) contributes to the ADP binding site.

This sequence belongs to the pyruvate, phosphate/water dikinase regulatory protein family. PSRP subfamily.

The catalysed reaction is [pyruvate, water dikinase] + ADP = [pyruvate, water dikinase]-phosphate + AMP + H(+). It catalyses the reaction [pyruvate, water dikinase]-phosphate + phosphate + H(+) = [pyruvate, water dikinase] + diphosphate. In terms of biological role, bifunctional serine/threonine kinase and phosphorylase involved in the regulation of the phosphoenolpyruvate synthase (PEPS) by catalyzing its phosphorylation/dephosphorylation. In Shewanella sp. (strain ANA-3), this protein is Putative phosphoenolpyruvate synthase regulatory protein.